The sequence spans 566 residues: Cyclin G (566 aa).

The Cyclin N-terminal domain maps to 285-368 (MWYELPSDVL…VIANKLGVQM (84 aa)).

Belongs to the cyclin family. Cyclin G subfamily. Interacts with corto. Interacts with the cyclin-dependent kinases Cdk2 and Cdk4. Interacts with Brca2 and Rad9. Interacts with polycomb protein Asx. Interacts with protein phosphatase 2A subunit wdb.

It is found in the chromosome. In terms of biological role, cyclin with roles in multiple processes including transcription, meiotic recombination repair, cell cycle regulation, and promotion of normal growth and metabolism. Binds to the promoter region of the homeobox gene Abd-B and is involved in maintaining Abd-B expression in the pupal epithelium. Involved in the transcriptional repression of the homeotic genes Scr and Ubx. Plays a role in meiotic recombination repair of DNA double-strand breaks which ensures efficient translation of grk and promotes grk activity in the oocyte, leading to oocyte dorso-ventral axis formation following secretion of grk from the oocyte and its binding to Egfr in the directly overlying follicle cells. Negatively regulates the binding of serine/threonine-protein kinase Akt1 to the protein phosphatase 2A subunit wdb, promoting normal growth and metabolism. Required for the formation of bilateral symmetry. Negatively regulates cell cycle progression by preventing G1 to S transition and retarding S-phase progression. The polypeptide is Cyclin G (Drosophila melanogaster (Fruit fly)).